Consider the following 398-residue polypeptide: Acetate kinase (398 aa).

Asparagine 8 is a Mg(2+) binding site. Position 15 (lysine 15) interacts with ATP. Arginine 89 is a binding site for substrate. Aspartate 146 serves as the catalytic Proton donor/acceptor. ATP is bound by residues 206-210 (HIGNG), 283-285 (DMR), and 331-335 (GMGEN). Glutamate 383 contacts Mg(2+).

It belongs to the acetokinase family. In terms of assembly, homodimer. Requires Mg(2+) as cofactor. Mn(2+) serves as cofactor.

The protein localises to the cytoplasm. The enzyme catalyses acetate + ATP = acetyl phosphate + ADP. Its pathway is metabolic intermediate biosynthesis; acetyl-CoA biosynthesis; acetyl-CoA from acetate: step 1/2. Its function is as follows. Catalyzes the formation of acetyl phosphate from acetate and ATP. Can also catalyze the reverse reaction. The chain is Acetate kinase from Streptococcus pyogenes serotype M5 (strain Manfredo).